The primary structure comprises 41 residues: Large ribosomal subunit protein bL36 (41 aa).

Belongs to the bacterial ribosomal protein bL36 family.

In Rhizobium etli (strain CIAT 652), this protein is Large ribosomal subunit protein bL36.